The chain runs to 282 residues: MIYETAPAKINFTLDTLFKRNDGYHEIEMIMTTVDLNDRLTFHKRKDRKIVVEIEHNYVPSNHKNLAYRAAQLFIEQYQLKQGVTISIDKEIPVSAGLAGGSADAAATLRGLNRLFNIGASLEELALLGSKIGTDIPFCIYNKTALCTGKGEKIEFLNKPPSAWVILAKPNLGISSPDIFKLINLDKRYDVHTKMCYEALENRDYQQLCQSLSNRLEPISVSKHPQIDKLKNNMLKSGADGALMSGSGPTVYGLAQKESQAKNIYNAVNGCCNEVYLVRLLG.

Residue Lys-9 is part of the active site. Residue 93–103 participates in ATP binding; the sequence is PVSAGLAGGSA. Asp-135 is a catalytic residue.

The protein belongs to the GHMP kinase family. IspE subfamily.

The enzyme catalyses 4-CDP-2-C-methyl-D-erythritol + ATP = 4-CDP-2-C-methyl-D-erythritol 2-phosphate + ADP + H(+). Functionally, catalyzes the phosphorylation of the position 2 hydroxy group of 4-diphosphocytidyl-2C-methyl-D-erythritol. This chain is Putative 4-diphosphocytidyl-2-C-methyl-D-erythritol kinase, found in Staphylococcus aureus (strain MRSA252).